The sequence spans 504 residues: Galactokinase (504 aa).

Residues Arg47, Asp53, His54, and Asp56 each contribute to the alpha-D-galactose site. ATP contacts are provided by Gly150, Gly152, Ser154, and Ser155. Asn196 and Asp200 together coordinate alpha-D-galactose. The active-site Proton acceptor is Asp200. Ser244, Asn245, and Lys246 together coordinate ATP. Tyr254 provides a ligand contact to alpha-D-galactose.

Belongs to the GHMP kinase family. GalK subfamily.

It catalyses the reaction alpha-D-galactose + ATP = alpha-D-galactose 1-phosphate + ADP + H(+). The protein operates within carbohydrate metabolism; galactose metabolism. Functionally, galactokinase is a key enzyme in the galactose metabolism where it catalyzes the conversion of alpha-D-galactose to galactose 1-phosphate. Can also induce the transcription of the gal genes in response to the organism being challenged with galactose as the sole source of carbon. This chain is Galactokinase, found in Candida parapsilosis (Yeast).